Reading from the N-terminus, the 570-residue chain is Formate--tetrahydrofolate ligase (570 aa).

Residue 65–72 (TPHGEGKT) coordinates ATP.

The protein belongs to the formate--tetrahydrofolate ligase family.

The catalysed reaction is (6S)-5,6,7,8-tetrahydrofolate + formate + ATP = (6R)-10-formyltetrahydrofolate + ADP + phosphate. Its pathway is one-carbon metabolism; tetrahydrofolate interconversion. The protein is Formate--tetrahydrofolate ligase of Shewanella putrefaciens (strain CN-32 / ATCC BAA-453).